The primary structure comprises 387 residues: MRILKSHPLLKLVNSYLIDASQPSNISYLWNFGSLLLLCLIIQIITGVTLAMHYSPNVLEAFNSIEHIMRDVNNGWLVRYLHSNTASAFFFLVYLHIGRGMYYGSYRAPRTLVWAIGTVILIVMIVTAFLGYVLPYGQMSLWGATVITNLVSAIPWIGQDIVEFIWGGFSVNNATLNRFFALHYLLPFILVALVLMHLIALHDTAGSSNPLGISGNYDRITFAPYYLFKDLITIFIFIFVLSSFVFFMSNVLGDSENYIMANPMQTPAAIVPEWYLLPFYAILRSIPNKLLGVIAMFAAILAIMLLPITDLGRSKGLQFRPLSKFAFWVFVVNFLILMKLGACHVETPFIELGQLSTALYFGHFIIIVPIISLIENTLVDLNTMSKG.

The next 4 helical transmembrane spans lie at Phe-32–Met-52, Trp-76–Gly-98, Val-113–Val-133, and Phe-179–Ile-199. 2 residues coordinate heme b: His-82 and His-96. Heme b contacts are provided by His-183 and His-197. His-202 contributes to the a ubiquinone binding site. Transmembrane regions (helical) follow at residues Tyr-226 to Phe-246, Leu-290 to Asp-310, Leu-322 to Ala-342, and Phe-349 to Pro-369.

Belongs to the cytochrome b family. Fungal cytochrome b-c1 complex contains 10 subunits; 3 respiratory subunits, 2 core proteins and 5 low-molecular weight proteins. Cytochrome b-c1 complex is a homodimer. Heme b is required as a cofactor.

The protein localises to the mitochondrion inner membrane. In terms of biological role, component of the ubiquinol-cytochrome c reductase complex (complex III or cytochrome b-c1 complex) that is part of the mitochondrial respiratory chain. The b-c1 complex mediates electron transfer from ubiquinol to cytochrome c. Contributes to the generation of a proton gradient across the mitochondrial membrane that is then used for ATP synthesis. The sequence is that of Cytochrome b (COB) from Podospora anserina (strain S / ATCC MYA-4624 / DSM 980 / FGSC 10383) (Pleurage anserina).